A 1603-amino-acid chain; its full sequence is MKSIIIASLVALAIAASPALDRTFSPKSEYVYKFDGLLLSGLPTTFSDASQTLISCRTRLQAVDDRYIHLQLIDIQYSASHIPQSEQWPKIESLEQRELSDELKELLELPFRAQIRNGLVSEIQFSSEDAEWSKNAKRSILNLFSLRKSAPVDEMSQDQKDMESDKDSLFFNVHEKTMEGDCEVAYTIVQEGGKTIYTKSVNFDKCITRPETAYGLRFGSECKECEKEGQFVQPQTVYTYTFKNEKLQESEVNSIYTLNVNGQEVVKSETRAKVTFVEESKINREIKKVSGPKEEIVYSMENEKLIEQFYKQGDKAEVNPFKAIEIEQKVEQLEEIFRQIQEHEQNTPETVHLIARAVRMFRMCTIEELKKVHTTIYTKAEKKVQLVIETTLAVAGTKNTIQHLIHHFEKKSITPLRAAELLKSVQETLYPSEHIADLLIQLAQSPLSEKYEPLRQSAWLAAGSVVRGFASKTQDLPLIRPASRQTKEKYVRVFMQHFRNADSTYEKVLALKTLGNAGIDLSVYELVQLIQDPRQPLSIRTEAVDALRLLKDVMPRKIQKVLLPVYKNRQNKPELRMAALWRMMHTIPEEPVLAHIVSQMENESNQHVAAFTYNVLRQFSKSTNPCYQQLAVRCSKVLLFTRYQPQEQMLSTYSQLPLFNSEWLSGVQFDFATIFEKNAFLPKEVQASFETVFGGNWNKYFAQVGFSQQNFEQVILKTLEKLSLYGKQSDELRSRRVQSGIQMLQEIVKKMNIRPRVQQTDSQNAHAVFYLRYKEMDYIVLPIDMETIDNVVEKYVRNGEFDIKSLLTFLTNDSKFELHRALFFYEAERRIPTTIGMPLTISGKMPTILSINGKVSIELEKLGARLVLDIVPTVATTHVTEMRFWYPVIEQGVKSLQSARLHTPLRFESTVELKKNTLEITHKFVVPENKKTTVSVHTRPVAFIRVPKNQDSEYVEAEEKTISHSQYQMSTEEIDRQYETFGLRINAQGNVLSQWTLPMVLMTEQDFEFTLENKNRPVEFTARVTIGNLEKTDLSEIKFDKIFEKEFDLENNESENRRQYFHKMIREIQSEQGFKNLITLKLEAPQQMYWNTELRTVCDKWIRMCKVEMDARRSPIEHENKEWTLRTELLAARPQMPSSLRQLREQPHREVQLALNAKWGSSKKSEITFNAQLEQSTEQKKFLRNIEREYKGIPEYELLIKAARLNQVNVVSEYKLTPESEYTFSRIFDLIKAYNFWTVSEKRVQNEDRRVVLQLSVEPLSRQYMNMTIQTPEQEVELKNVRIPRVVLPTIARRAMFQQTWEKTGATCKVDQSEVSTFDNVIYRAPLTTCYSLVAKDCSEQPRFAVLAKKINKNSEELLVKVVRREEEIVVKKSDDKFLVKVDGKKVNPTELEQYNIEILGDNLIVIRLPHGEVRFDGYTVKTNMPSVASQNQLCGLCGNNDGERDNEFMTADNYETEDVEEFHRSYLLKNEECEVEKDRISEKKNYKNKWNREEKKSDYESSSDYESNYDEKETEKELVKKTLIKEFSNRVCFSIEPVSECRRGLESEKTSNKKIRFTCMPRHSKNARRFLKEAREQTVADLVDFPVSFVESVKIPTACVAY.

A signal peptide spans 1–15 (MKSIIIASLVALAIA). The Vitellogenin domain occupies 24 to 685 (FSPKSEYVYK…EKNAFLPKEV (662 aa)). N-linked (GlcNAc...) asparagine glycosylation occurs at Asn1266. The 170-residue stretch at 1306–1475 (ATCKVDQSEV…SYLLKNEECE (170 aa)) folds into the VWFD domain. 2 cysteine pairs are disulfide-bonded: Cys1308/Cys1438 and Cys1330/Cys1474.

In terms of tissue distribution, expressed in the intestine of adult hermaphrodites.

It localises to the secreted. Precursor of the egg-yolk proteins that are sources of nutrients during embryonic development. Together with other vitellogenins, may play a role in modulating life-span, acting via induction of autophagy and lysosomal lipolysis. The sequence is that of Vitellogenin-4 (vit-4) from Caenorhabditis elegans.